The following is a 38-amino-acid chain: Large ribosomal subunit protein bL36 (38 aa).

The protein belongs to the bacterial ribosomal protein bL36 family.

This is Large ribosomal subunit protein bL36 from Enterococcus faecalis (strain ATCC 700802 / V583).